A 360-amino-acid polypeptide reads, in one-letter code: G-protein coupled receptor 15 (360 aa).

Residues 1 to 33 are Extracellular-facing; that stretch reads MEPATALLIVDYYDYTSPDPPFLETPSHLSYTS. Residues 34 to 54 form a helical membrane-spanning segment; the sequence is VFLPIFYTVVFLTGVVGNFIL. The Cytoplasmic segment spans residues 55-69; that stretch reads MIALHFKRGNRRLID. A helical transmembrane segment spans residues 70–90; that stretch reads IFIINLAASDFIFLVTVPLWM. At 91–120 the chain is on the extracellular side; that stretch reads DKEASLGLWRTGSFLCKGSSYVISVNMHCS. A helical membrane pass occupies residues 121–141; that stretch reads VFLLTCMSMDRYLAIMHPALA. Residues 142-149 are Cytoplasmic-facing; that stretch reads KRLRRRSS. The helical transmembrane segment at 150-170 threads the bilayer; it reads AYAVCAVVWIISCVLGLPTLL. Residues 171-192 are Extracellular-facing; it reads SRELTHIEGKPYCAEKKPTSLK. Residues 193–213 traverse the membrane as a helical segment; the sequence is LMWGLVALITTFFVPLLSIVT. Residues 214–239 lie on the Cytoplasmic side of the membrane; it reads CYCCITRRLCAHYQQSGKHNKKLKKS. The helical transmembrane segment at 240–260 threads the bilayer; sequence IKIVIIAVAAFTVSWVPFNTF. Residues 261–284 lie on the Extracellular side of the membrane; that stretch reads KLLAIVSGFQPEGLFHSEALQLAM. The chain crosses the membrane as a helical span at residues 285–305; sequence NVTGPLAFASSCVNPLIYYVF. At 306-360 the chain is on the cytoplasmic side; the sequence is DSYIRRAIVRCLCPCLKTHNFGSSTETSDSHLTKALSNFIHAEDFIRRRKRSVSL. Ser-359 carries the phosphoserine modification.

This sequence belongs to the G-protein coupled receptor 1 family. As to quaternary structure, interacts with adapter YWHAE; this interaction promotes ER-to-Golgi transport of GPR15. In terms of processing, phosphorylation is necessary for YWHAE binding and efficient surface expression. O-glycosylated. Sialylated O-glycans in the N-terminal tail inhibits binding of GPR15LG. Post-translationally, sulfation is required for efficient binding of GPR15LG. Highly expressed in gut tissues and lymphoid organs, largely restricted to TCRbeta+ cells. Expressed in fetal thymic dendritic epidermal T-cell precursors.

It is found in the cell membrane. In terms of biological role, g protein-coupled receptor that plays an important role in immune homeostasis. Acts via its natural ligand GPR15LG, a chemokine-like polypeptide strongly expressed in gastrointestinal tissues. GPR15-GPR15LG signaling axis regulates intestinal homeostasis and inflammation through the migration of immune cells. Controls thereby the specific homing of T-cells, particularly FOXP3+ regulatory T-cells (Tregs), to the large intestine lamina propria. Also required for skin localization of thymus-derived dendritic epidermal T-cells. Plays an important role in mediating cytoprotective function as well as angiogenesis of thrombomodulin. Mechanistically, preferentially signals through the Gi/o pathway to inhibit adenylate cyclase activity and activate a phosphatidylinositol-calcium second messenger system that regulates the release of Ca(2+) ions from intracellular stores. In Mus musculus (Mouse), this protein is G-protein coupled receptor 15 (Gpr15).